A 1849-amino-acid polypeptide reads, in one-letter code: MAVSRLDRLFILLDTGTTPVTRKAAAQQLGEVVKLHPHELNNLLSKVLIYLRSANWDTRIAAGQAVEAIVKNVPEWNPVPRTRQEPTSESSMEDSPTTERLNFDRFDICRLLQHGASLLGSAGAEFEVQDEKSGEVDPKERIARQRKLLQKKLGLNMGEAIGMSTEELFNDEDLDYTPTSASFVNKQPTLQAAELIDSEFRAGMSNRQKNKAKRMAKLFAKQRSRDAVETNEKSNDSTDGEPEEKRRKIANVVINQSANDSKVLIDNIPDSSSLIEETNEWPLESFCEELCNDLFNPSWEVRHGAGTGLREILKAHGKSGGKMGDSTLEEMIQQHQEWLEDLVIRLLCVFALDRFGDFVSDEVVAPVRETCAQTLGVVLKHMNETGVHKTVDVLLKLLTQEQWEVRHGGLLGIKYALAVRQDVINTLLPKVLTRIIEGLQDLDDDVRAVAAASLVPVVESLVYLQTQKVPFIINTLWDALLELDDLTASTNSIMTLLSSLLTYPQVQQCSIQQSLTVLVPRVWPFLHHTISSVRRAALETLFTLLSTQDQNSSSWLIPILPDMLRHIFQFCVLESSQEILDLIHKVWMELLSKASVQYVVAAACPWMGAWLCLMMQPSHLPIDLNMLLEVKARAKEKTGGKVRQGQSQNKEVLQEYIAGADTIMEDPATRDFVVMRARMMAAKLLGALCCCICDPGVNVVTQEIKPAESLGQLLLFHLNSKSALQRISVALVICEWAALQKECKAVTLAVQPRLLDILSEHLYYDEIAVPFTRMQNECKQLISSLADVHIEVGNRVNNNVLTIDQASDLVTTVFNEATSSFDLNPQVLQQLDSKRQQVQMTVTETNQEWQVLQLRVHTFAACAVVSLQQLPEKLNPIIKPLMETIKKEENTLVQNYAAQCIAKLLQQCTTRTPCPNSKIIKNLCSSLCVDPYLTPCVTCPVPTQSGQENSKGSTSEKDGMHHTVTKHRGIITLYRHQKAAFAITSRRGPTPKAVKAQIADLPAGSSGNILVELDEAQKPYLVQRRGAEFALTTIVKHFGGEMAVKLPHLWDAMVGPLRNTIDINNFDGKSLLDKGDSPAQELVNSLQVFETAAASMDSELHPLLVQHLPHLYMCLQYPSTAVRHMAARCVGVMSKIATMETMNIFLEKVLPWLGAIDDSVKQEGAIEALACVMEQLDVGIVPYIVLLVVPVLGRMSDQTDSVRFMATQCFATLIRLMPLEAGIPDPPNMSAELIQLKAKERHFLEQLLDGKKLENYKIPVPINAELRKYQQDGVNWLAFLNKYKLHGILCDDMGLGKTLQSICILAGDHCHRAQEYARSKLAECMPLPSLVVCPPTLTGHWVDEVGKFCSREYLNPLHYTGPPTERIRLQHQVKRHNLIVASYDVVRNDIDFFRNIKFNYCILDEGHVIKNGKTKLSKAVKQLTANYRIILSGTPIQNNVLELWSLFDFLMPGFLGTERQFAARYGKPILASRDARSSSREQEAGVLAMDALHRQVLPFLLRRMKEDVLQDLPPKIIQDYYCTLSPLQVQLYEDFAKSRAKCDVDETVSSATLSEETEKPKLKATGHVFQALQYLRKLCNHPALVLTPQHPEFKTTAEKLAVQNSSLHDIQHAPKLSALKQLLLDCGLGNGSTSESGTESVVAQHRILIFCQLKSMLDIVEHDLLKPHLPSVTYLRLDGSIPPGQRHSIVSRFNNDPSIDVLLLTTHVGGLGLNLTGADTVVFVEHDWNPMRDLQAMDRAHRIGQKRVVNVYRLITRGTLEEKIMGLQKFKMNIANTVISQENSSLQSMGTDQLLDLFTLDKDGKAEKADTSTSGKASMKSILENLSDLWDQEQYDSEYSLENFMHSLK.

The tract at residues 77–97 (NPVPRTRQEPTSESSMEDSPT) is disordered. The segment covering 85-97 (EPTSESSMEDSPT) has biased composition (polar residues). 2 positions are modified to phosphoserine: S91 and S95. Positions 191 to 207 (QAAELIDSEFRAGMSNR) match the Nuclear localization signal motif. The segment at 219-247 (FAKQRSRDAVETNEKSNDSTDGEPEEKRR) is disordered. The segment covering 223–236 (RSRDAVETNEKSND) has biased composition (basic and acidic residues). HEAT repeat units lie at residues 385 to 422 (TGVH…VRQD), 426 to 463 (TLLP…SLVY), 513 to 550 (QSLT…TQDQ), 554 to 596 (SWLI…KASV), 818 to 855 (TSSF…LQLR), 872 to 910 (EKLN…QCTT), 1102 to 1139 (PLLV…IATM), and 1182 to 1219 (PYIV…LMPL). In terms of domain architecture, Helicase ATP-binding spans 1278-1453 (AFLNKYKLHG…WSLFDFLMPG (176 aa)). Residue 1291–1298 (DDMGLGKT) coordinates ATP. The short motif at 1404–1407 (DEGH) is the DEGH box element. The Helicase C-terminal domain maps to 1636–1790 (SGTESVVAQH…QENSSLQSMG (155 aa)).

It belongs to the SNF2/RAD54 helicase family. Associates with TBP to form B-TFIID. Binds DRAP1.

Its subcellular location is the nucleus. Regulates transcription in association with TATA binding protein (TBP). Removes TBP from the TATA box in an ATP-dependent manner. The chain is TATA-binding protein-associated factor 172 (BTAF1) from Homo sapiens (Human).